Here is a 306-residue protein sequence, read N- to C-terminus: Beta-lactamase 1 (306 aa).

A signal peptide spans 1 to 43; the sequence is MKNKRMLKIGMCVGILGLSVTSLEAFTGGALQVEAKEKTGQVK. The active-site Acyl-ester intermediate is the Ser-89. Residue Glu-185 is the Proton acceptor of the active site. Residue 251-253 participates in substrate binding; sequence KSG.

This sequence belongs to the class-A beta-lactamase family.

The catalysed reaction is a beta-lactam + H2O = a substituted beta-amino acid. In terms of biological role, this protein is a beta-lactamase with a substrate specificity for penicillins. This chain is Beta-lactamase 1 (blaCI), found in Bacillus mycoides.